Consider the following 121-residue polypeptide: Small ribosomal subunit protein eS24 (121 aa).

The protein belongs to the eukaryotic ribosomal protein eS24 family.

The chain is Small ribosomal subunit protein eS24 from Pyrobaculum aerophilum (strain ATCC 51768 / DSM 7523 / JCM 9630 / CIP 104966 / NBRC 100827 / IM2).